Here is a 593-residue protein sequence, read N- to C-terminus: Progranulin (593 aa).

An N-terminal signal peptide occupies residues M1 to G17. N118 is a glycosylation site (N-linked (GlcNAc...) asparagine). 2 cysteine pairs are disulfide-bonded: C126/C139 and C133/C149. N236 and N265 each carry an N-linked (GlcNAc...) asparagine glycan. Disulfide bonds link C284–C296, C290–C306, C297–C314, C307–C321, C315–C328, C322–C335, C366–C378, C372–C388, C397–C410, and C404–C416. A glycan (N-linked (GlcNAc...) asparagine) is linked at N368. N-linked (GlcNAc...) asparagine glycosylation is present at N530.

This sequence belongs to the granulin family. In terms of assembly, progranulin is secreted as a homodimer. Interacts with SLPI; interaction protects progranulin from proteolysis. Interacts (via region corresponding to granulin-7 peptide) with CTSD; stabilizes CTSD and increases its proteolytic activity. Interacts (via region corresponding to granulin-7 peptide) with SORT1; this interaction mediates endocytosis and lysosome delivery of progranulin; interaction occurs at the neuronal cell surface in a stressed nervous system. Interacts with PSAP; facilitates lysosomal delivery of progranulin from the extracellular space and the biosynthetic pathway. Forms a complex with PSAP and M6PR; PSAP bridges the binding between progranulin and M6PR. Forms a complex with PSAP and SORT1; progranulin bridges the interaction between PSAP and SORT1; facilitates lysosomal targeting of PSAP via SORT1; interaction enhances PSAP uptake in primary cortical neurons. Interacts (via regions corresponding to granulin-2 and granulin-7 peptides) with GBA1; this interaction prevents aggregation of GBA1-SCARB2 complex via interaction with HSPA1A upon stress. Interacts (via region corresponding to granulin-7 peptide) with HSPA1A; mediates recruitment of HSPA1A to GBA1 and prevents GBA1 aggregation in response to stress. In terms of processing, cleaved by ELANE; proteolysis is blocked by SLPI and is concentration- and time-dependent and induces CXCL8/IL-8 production; granulin-3 and granulin-4 are resistant to ELANE. Cleaved by CTSL in lysosome thus regulating the maturation and turnover of progranulin within the lysosome. In myelogenous leukemic cell lines of promonocytic, promyelocytic, and proerythroid lineage, in fibroblasts, and very strongly in epithelial cell lines. Present in inflammatory cells and bone marrow. Highest levels in kidney.

The protein localises to the secreted. Its subcellular location is the lysosome. Secreted protein that acts as a key regulator of lysosomal function and as a growth factor involved in inflammation, wound healing and cell proliferation. Regulates protein trafficking to lysosomes, and also the activity of lysosomal enzymes. Also facilitates the acidification of lysosomes, causing degradation of mature CTSD by CTSB. In addition, functions as a wound-related growth factor that acts directly on dermal fibroblasts and endothelial cells to promote division, migration and the formation of capillary-like tubule structures. Also promotes epithelial cell proliferation by blocking TNF-mediated neutrophil activation preventing release of oxidants and proteases. Moreover, modulates inflammation in neurons by preserving neurons survival, axonal outgrowth and neuronal integrity. In terms of biological role, promotes proliferation of the epithelial cell line A431 in culture. Its function is as follows. Inhibits epithelial cell proliferation and induces epithelial cells to secrete IL-8. Functionally, stabilizes CTSD through interaction with CTSD leading to maintain its aspartic-type peptidase activity. The polypeptide is Progranulin (Homo sapiens (Human)).